We begin with the raw amino-acid sequence, 61 residues long: MAKKAMIERWKKPKKYKVREYTRCHICGRPRAVYREFGLCRICFRKLALEGKLPGVRKASW.

Residues Cys-24, Cys-27, Cys-40, and Cys-43 each coordinate Zn(2+).

This sequence belongs to the universal ribosomal protein uS14 family. Zinc-binding uS14 subfamily. In terms of assembly, part of the 30S ribosomal subunit. Contacts proteins S3 and S10. Zn(2+) serves as cofactor.

Binds 16S rRNA, required for the assembly of 30S particles and may also be responsible for determining the conformation of the 16S rRNA at the A site. This Thermotoga maritima (strain ATCC 43589 / DSM 3109 / JCM 10099 / NBRC 100826 / MSB8) protein is Small ribosomal subunit protein uS14.